Here is a 398-residue protein sequence, read N- to C-terminus: Transcription termination factor 1, mitochondrial (398 aa).

A mitochondrion-targeting transit peptide spans 1–57 (MQSLSLGQTSISKGLNYLTIMAPGNLWHMRNNFLFGSRCWMTRFSAENIFKSVSFRL). Interaction with DNA stretches follow at residues 169-170 (RS), 246-250 (QSTKR), 323-330 (AEKKFNDK), 354-357 (SIST), and 383-390 (SKKRYEAK).

Belongs to the mTERF family. In terms of assembly, monomer. Post-translationally, phosphoprotein with mostly four phosphate groups. While the DNA-binding activity is unaffected by the phosphorylation state, only the phosphorylated form of the protein is active for termination activity. Functioning seems to be regulated by phosphorylation.

It is found in the mitochondrion. Its function is as follows. Transcription termination factor. Binds to a 28 bp region within the tRNA(Leu(uur)) gene at a position immediately adjacent to and downstream of the 16S rRNA gene; this region comprises a tridecamer sequence critical for directing accurate termination. Binds DNA along the major grove and promotes DNA bending and partial unwinding. Promotes base flipping. Transcription termination activity appears to be polarized with highest specificity for transcripts initiated on the light strand. The sequence is that of Transcription termination factor 1, mitochondrial (MTERF1) from Pongo abelii (Sumatran orangutan).